Reading from the N-terminus, the 161-residue chain is tRNA-acetylating toxin 1 (161 aa).

Positions 92, 94, 99, 100, 102, 104, 105, 132, and 135 each coordinate acetyl-CoA. Residue Tyr-140 is part of the active site. Position 142 (His-142) interacts with acetyl-CoA.

Belongs to the acetyltransferase family. GNAT subfamily. Homodimer (in absence of antitoxin). Forms a complex with cognate antitoxin TacA1. Forms a 4:2 antitoxin:toxin complex with cognate antitoxin TacA1.

The enzyme catalyses glycyl-tRNA(Gly) + acetyl-CoA = N-acetylglycyl-tRNA(Gly) + CoA + H(+). In terms of biological role, toxic component of a type II toxin-antitoxin (TA) system. Acetylates tRNA and inhibits translation, does not acetylate uncharged tRNA. Upon expression in situ acetylates only Gly-tRNA(Gly). In vitro acetylates mainly Gly and Ile/Leu. Upon induction of the toxin gene in lag phase in rich medium (but not mid-exponential phase) the lag phase is extended by several hours, locking bacteria in a non-growth state. Neutralized only by cognate antitoxin TacA1 (A8), but not by TacA2 or TacA3. Its toxic effect is neutralized by expression of peptidyl-tRNA hydrolase (pth) in lag phase. NAD-dependent protein deacylase (cobB) also play a role in detoxifying TacT targets. Expression increases persister cell formation, which is also abolished by either cognate antitoxin or Pth expression. Plays a role in persister cell formation. The TacA1-TacT1 complex binds (and probably represses) its own promoter DNA but not that of tacA3-tacT3, it does not repress the tacA3-tacT3 promoter. The sequence is that of tRNA-acetylating toxin 1 from Salmonella typhimurium (strain 14028s / SGSC 2262).